Reading from the N-terminus, the 571-residue chain is Proline--tRNA ligase (571 aa).

Belongs to the class-II aminoacyl-tRNA synthetase family. ProS type 1 subfamily. In terms of assembly, homodimer.

The protein localises to the cytoplasm. It carries out the reaction tRNA(Pro) + L-proline + ATP = L-prolyl-tRNA(Pro) + AMP + diphosphate. Functionally, catalyzes the attachment of proline to tRNA(Pro) in a two-step reaction: proline is first activated by ATP to form Pro-AMP and then transferred to the acceptor end of tRNA(Pro). As ProRS can inadvertently accommodate and process non-cognate amino acids such as alanine and cysteine, to avoid such errors it has two additional distinct editing activities against alanine. One activity is designated as 'pretransfer' editing and involves the tRNA(Pro)-independent hydrolysis of activated Ala-AMP. The other activity is designated 'posttransfer' editing and involves deacylation of mischarged Ala-tRNA(Pro). The misacylated Cys-tRNA(Pro) is not edited by ProRS. The protein is Proline--tRNA ligase of Vibrio atlanticus (strain LGP32) (Vibrio splendidus (strain Mel32)).